We begin with the raw amino-acid sequence, 1031 residues long: GTPase-activating protein DDB_G0291510 (1031 aa).

Residues 18–48 (VEKGDIDENNSGSINNRPLSPTLFSSNSSNN) are disordered. Positions 26-41 (NNSGSINNRPLSPTLF) are enriched in polar residues. One can recognise a Rap-GAP domain in the interval 186-404 (FKDLEQTQTE…RTFKDQLESI (219 aa)). The 411-residue stretch at 471-881 (NEKINCLDVV…LSNDDCNLDN (411 aa)) folds into the CNH domain. Positions 920-950 (NNNYNNNGNNSNGGNNNNNNNNNNGCNNSLI) are disordered.

This is GTPase-activating protein DDB_G0291510 from Dictyostelium discoideum (Social amoeba).